The sequence spans 172 residues: Putative Dresden prostate carcinoma protein 2 (172 aa).

Residues 40–61 (QCEEEEAMTPRPTKARAPLPSA) are disordered.

Very high expression in prostate and prostate cancer. Faint expression in other tissues.

This Homo sapiens (Human) protein is Putative Dresden prostate carcinoma protein 2 (HMGN2P46).